The following is a 237-amino-acid chain: Phosphoribosylaminoimidazole-succinocarboxamide synthase (237 aa).

The protein belongs to the SAICAR synthetase family.

It carries out the reaction 5-amino-1-(5-phospho-D-ribosyl)imidazole-4-carboxylate + L-aspartate + ATP = (2S)-2-[5-amino-1-(5-phospho-beta-D-ribosyl)imidazole-4-carboxamido]succinate + ADP + phosphate + 2 H(+). It functions in the pathway purine metabolism; IMP biosynthesis via de novo pathway; 5-amino-1-(5-phospho-D-ribosyl)imidazole-4-carboxamide from 5-amino-1-(5-phospho-D-ribosyl)imidazole-4-carboxylate: step 1/2. This Hamiltonella defensa subsp. Acyrthosiphon pisum (strain 5AT) protein is Phosphoribosylaminoimidazole-succinocarboxamide synthase.